The sequence spans 268 residues: Phosphate import ATP-binding protein PstB 3 (268 aa).

The region spanning 15–254 is the ABC transporter domain; it reads LRTENLNVYY…DATESIFNNP (240 aa). 47–54 lines the ATP pocket; it reads GPSGCGKS.

This sequence belongs to the ABC transporter superfamily. Phosphate importer (TC 3.A.1.7) family. The complex is composed of two ATP-binding proteins (PstB), two transmembrane proteins (PstC and PstA) and a solute-binding protein (PstS).

The protein localises to the cell inner membrane. The catalysed reaction is phosphate(out) + ATP + H2O = ADP + 2 phosphate(in) + H(+). Its function is as follows. Part of the ABC transporter complex PstSACB involved in phosphate import. Responsible for energy coupling to the transport system. This chain is Phosphate import ATP-binding protein PstB 3, found in Nostoc sp. (strain PCC 7120 / SAG 25.82 / UTEX 2576).